The chain runs to 497 residues: tRNA (adenine(58)-N(1))-methyltransferase non-catalytic subunit TRM6 (497 aa).

The interval 81 to 103 (LEEPASETKEAGTDNRNIVDDGK) is disordered. Residues 95–105 (NRNIVDDGKSQ) are substrate. Position 108 is a phosphothreonine (threonine 108). Substrate regions lie at residues 146-155 (KYIKKKKKKY) and 176-183 (REPGKINH). Residues 275-354 (MLSSEPKDST…EKQRRQEEQR (80 aa)) are disordered. Over residues 289–307 (SNGELEEKEIAEQADEDNI) the composition is skewed to acidic residues. Residues 328–354 (PENKEPKEKRSKRDYIQEKQRRQEEQR) show a composition bias toward basic and acidic residues. Substrate-binding residues include arginine 349 and arginine 377. 2 substrate regions span residues 415–423 (RERGGVINL) and 434–441 (QVLPDRSH). Residues 474–497 (TGALDPHKAEEPAAKKQKCMESAS) are disordered. The span at 478–487 (DPHKAEEPAA) shows a compositional bias: basic and acidic residues.

Belongs to the TRM6/GCD10 family. In terms of assembly, heterotetramer; composed of two copies of TRMT6 and two copies of TRMT61A.

The protein localises to the nucleus. Its function is as follows. Substrate-binding subunit of tRNA (adenine-N(1)-)-methyltransferase, which catalyzes the formation of N(1)-methyladenine at position 58 (m1A58) in initiator methionyl-tRNA. Together with the TRMT61A catalytic subunit, part of a mRNA N(1)-methyltransferase complex that mediates methylation of adenosine residues at the N(1) position of a small subset of mRNAs: N(1) methylation takes place in tRNA T-loop-like structures of mRNAs and is only present at low stoichiometries. The chain is tRNA (adenine(58)-N(1))-methyltransferase non-catalytic subunit TRM6 (Trmt6) from Mus musculus (Mouse).